The primary structure comprises 215 residues: Cytochrome b6 (215 aa).

Residues Ile-32–Phe-52 form a helical membrane-spanning segment. Cys-35 lines the heme c pocket. 2 residues coordinate heme b: His-86 and His-100. 3 helical membrane-spanning segments follow: residues Ala-90 to Phe-110, Leu-116 to Tyr-136, and Leu-186 to Ile-206. Heme b contacts are provided by His-187 and His-202.

This sequence belongs to the cytochrome b family. PetB subfamily. The 4 large subunits of the cytochrome b6-f complex are cytochrome b6, subunit IV (17 kDa polypeptide, PetD), cytochrome f and the Rieske protein, while the 4 small subunits are PetG, PetL, PetM and PetN. The complex functions as a dimer. It depends on heme b as a cofactor. Heme c serves as cofactor.

It is found in the plastid. Its subcellular location is the chloroplast thylakoid membrane. Component of the cytochrome b6-f complex, which mediates electron transfer between photosystem II (PSII) and photosystem I (PSI), cyclic electron flow around PSI, and state transitions. This Huperzia lucidula (Shining clubmoss) protein is Cytochrome b6.